A 950-amino-acid chain; its full sequence is Protocadherin alpha-3 (950 aa).

The signal sequence occupies residues Met1 to Gly29. 6 Cadherin domains span residues Gln30 to Phe133, Pro134 to Phe242, Glu243 to Leu350, Val351 to Phe455, Ser456 to Leu565, and Val581 to Ala678. At Gln30–Asn697 the chain is on the extracellular side. Residues Asn257 and Asn265 are each glycosylated (N-linked (GlcNAc...) asparagine). N-linked (GlcNAc...) asparagine glycosylation is present at Asn548. A helical membrane pass occupies residues Val698–Tyr718. Over Thr719–Gln950 the chain is Cytoplasmic. 2 PXXP repeats span residues Pro734–Pro737 and Pro774–Pro777. A 6 X 4 AA repeats of P-X-X-P region spans residues Pro734–Pro894. 3 disordered regions span residues Pro777–Trp806, Gly831–Pro856, and Phe869–Ile889. Positions Ser782–Ala797 are enriched in basic and acidic residues. 4 PXXP repeats span residues Pro799–Pro802, Pro832–Pro835, Pro873–Pro876, and Pro891–Pro894. The tract at residues Gln901–Gln950 is disordered. Basic and acidic residues predominate over residues Asp909 to Lys923.

Its subcellular location is the cell membrane. Its function is as follows. Potential calcium-dependent cell-adhesion protein. May be involved in the establishment and maintenance of specific neuronal connections in the brain. This Pan troglodytes (Chimpanzee) protein is Protocadherin alpha-3 (PCDHA3).